The following is a 254-amino-acid chain: Syntaxin-6 (254 aa).

Residues 1–233 (MSMEDPFFVV…VSHMTSDRRQ (233 aa)) lie on the Cytoplasmic side of the membrane. Positions 46–72 (TTNELRNNLRSIEWDLEDLDETISIVE) form a coiled coil. Residues 103–138 (KDQMSNSSMQALAERKNRQALLGESSSQSWSSGPDK) form a disordered region. In terms of domain architecture, t-SNARE coiled-coil homology spans 162–224 (QLIVEQQDEQ…DNVMKKLAKV (63 aa)). Residues 234–254 (WCAIIVLFVILLVVLVLFLVL) form a helical; Anchor for type IV membrane protein membrane-spanning segment.

The protein belongs to the syntaxin family.

It localises to the golgi apparatus membrane. Its subcellular location is the golgi apparatus. It is found in the trans-Golgi network membrane. The protein localises to the recycling endosome membrane. Its function is as follows. SNARE promoting movement of transport vesicles to target membranes. Targets endosomes to the trans-Golgi network, and may therefore function in retrograde trafficking. Together with SNARE STX12, promotes movement of vesicles from endosomes to the cell membrane, and may therefore function in the endocytic recycling pathway. The polypeptide is Syntaxin-6 (STX6) (Gallus gallus (Chicken)).